The primary structure comprises 224 residues: Elongation factor 1-beta 2 (224 aa).

A2 is subject to N-acetylalanine. Positions 14 to 65 (VKSVEEHLAGKTYISGDQLSVDDVKVYAAVPVKPSDAFPNASKWYESVASQL) constitute a GST C-terminal domain. A disordered region spans residues 89 to 139 (EAEAPAAAADDDDDMDLFGDETEEEKKAAEEREAAKKDTKKPKESGKSSVL). Residues 97–111 (ADDDDDMDLFGDETE) show a composition bias toward acidic residues. Basic and acidic residues predominate over residues 112 to 134 (EEKKAAEEREAAKKDTKKPKESG).

The protein belongs to the EF-1-beta/EF-1-delta family. In terms of assembly, EF-1 is composed of 4 subunits: alpha, beta (1B-alpha=beta'), delta (1B-beta), and gamma (1B-gamma).

Functionally, EF-1-beta and EF-1-delta stimulate the exchange of GDP bound to EF-1-alpha to GTP. The sequence is that of Elongation factor 1-beta 2 from Arabidopsis thaliana (Mouse-ear cress).